We begin with the raw amino-acid sequence, 103 residues long: CLAVATA3/ESR (CLE)-related protein 16 (103 aa).

Residues 1–21 (MEACSRKRRRRRAYTTSTTGY) form the signal peptide. The interval 71–103 (VSFTGQRREEENRDEVYKDDKRLVHTGPNPLHN) is disordered. Positions 76–93 (QRREEENRDEVYKDDKRL) are enriched in basic and acidic residues. At Pro98 the chain carries Hydroxyproline. Pro98 carries an O-linked (Ara...) hydroxyproline glycan.

Belongs to the CLV3/ESR signal peptide family. Post-translationally, the O-glycosylation (arabinosylation) of the hydroxyproline Pro-98 enhances binding affinity of the CLE16p peptide for its receptor. In terms of tissue distribution, expressed in roots, stems, apex, seedlings, leaves, flowers and siliques.

It localises to the secreted. The protein resides in the extracellular space. Functionally, extracellular signal peptide that regulates cell fate. Represses root apical meristem maintenance. Regulates the transition of protophloem cells from proliferation to differentiation, thus impinging on postembryonic growth capacity of the root meristem; this signaling pathway requires CRN and CLV2. The chain is CLAVATA3/ESR (CLE)-related protein 16 from Arabidopsis thaliana (Mouse-ear cress).